A 237-amino-acid polypeptide reads, in one-letter code: Small ribosomal subunit protein eS4 (237 aa).

An S4 RNA-binding domain is found at 37–99 (VPLLIVLRDV…REEYYRIFPD (63 aa)).

The protein belongs to the eukaryotic ribosomal protein eS4 family.

In Natronomonas pharaonis (strain ATCC 35678 / DSM 2160 / CIP 103997 / JCM 8858 / NBRC 14720 / NCIMB 2260 / Gabara) (Halobacterium pharaonis), this protein is Small ribosomal subunit protein eS4.